The sequence spans 112 residues: uncharacterized protein (112 aa).

This is an uncharacterized protein from Rickettsia conorii (strain ATCC VR-613 / Malish 7).